A 104-amino-acid chain; its full sequence is SPbeta prophage-derived stress response protein SCP1 (104 aa).

Its subcellular location is the cytoplasm. The chain is SPbeta prophage-derived stress response protein SCP1 (yorD) from Bacillus subtilis (strain 168).